The primary structure comprises 499 residues: MLLKPGNKLVSPETSHHRDSASNSSNHKCQQQKPRKDKQKQVEQNTKKIEEHQIKSESTLLISNHNVNMSSQSNNSESTSTNNSSKPHTGGDIRWDAVNSLKSRGIKLGISDFRVLKRLGYGDIGSVYLVELKGANPTTYFAMKVMDKASLVSRNKLLRAQTEREILSQLDHPFLPTLYSHFETDKFYCLVMEFCSGGNLYSLRQKQPNKCFTEDAARFFASEVLLALEYLHMLGIVYRDLKPENVLVRDDGHIMLSDFDLSLRCSVNPTLVKSFNGGGTTGIIDDNAAVQGCYQPSAFFPRMLQSSKKNRKSKSDFDGSLPELMAEPTNVKSMSFVGTHEYLAPEIIKNEGHGSAVDWWTFGIFIYELLHGATPFKGQGNKATLYNVIGQPLRFPEYSQVSSTAKDLIKGLLVKEPQNRIAYKRGATEIKQHPFFEGVNWALIRGETPPHLPEPVDFSCYVKKEKESLPPAATEKKSKMFDEANKSGSDPDYIVFEYF.

The tract at residues 1–92 (MLLKPGNKLV…NSSKPHTGGD (92 aa)) is disordered. Residues 39–55 (QKQVEQNTKKIEEHQIK) show a composition bias toward basic and acidic residues. Over residues 63-85 (SNHNVNMSSQSNNSESTSTNNSS) the composition is skewed to low complexity. The 324-residue stretch at 113-436 (FRVLKRLGYG…ATEIKQHPFF (324 aa)) folds into the Protein kinase domain. ATP-binding positions include 119–127 (LGYGDIGSV) and K144. Catalysis depends on D240, which acts as the Proton acceptor. Residues 437–499 (EGVNWALIRG…DPDYIVFEYF (63 aa)) form the AGC-kinase C-terminal domain.

Belongs to the protein kinase superfamily. AGC Ser/Thr protein kinase family. As to quaternary structure, interacts with PDPK1/PDK1. In terms of processing, autophosphorylated and phosphorylated by PDPK1/PDK1. Specifically expressed in root hair cells.

The enzyme catalyses L-seryl-[protein] + ATP = O-phospho-L-seryl-[protein] + ADP + H(+). It catalyses the reaction L-threonyl-[protein] + ATP = O-phospho-L-threonyl-[protein] + ADP + H(+). Activated by PDPK1/PDK1. Its function is as follows. Involved in root hair growth and morphogenesis. The polypeptide is Serine/threonine-protein kinase RHS3 (Arabidopsis thaliana (Mouse-ear cress)).